The primary structure comprises 303 residues: Methionyl-tRNA formyltransferase (303 aa).

110 to 113 provides a ligand contact to (6S)-5,6,7,8-tetrahydrofolate; that stretch reads SLLP.

Belongs to the Fmt family.

The enzyme catalyses L-methionyl-tRNA(fMet) + (6R)-10-formyltetrahydrofolate = N-formyl-L-methionyl-tRNA(fMet) + (6S)-5,6,7,8-tetrahydrofolate + H(+). Functionally, attaches a formyl group to the free amino group of methionyl-tRNA(fMet). The formyl group appears to play a dual role in the initiator identity of N-formylmethionyl-tRNA by promoting its recognition by IF2 and preventing the misappropriation of this tRNA by the elongation apparatus. In Campylobacter lari (strain RM2100 / D67 / ATCC BAA-1060), this protein is Methionyl-tRNA formyltransferase.